The following is a 223-amino-acid chain: UPF0173 metal-dependent hydrolase TV0864 (223 aa).

It belongs to the UPF0173 family.

The protein is UPF0173 metal-dependent hydrolase TV0864 of Thermoplasma volcanium (strain ATCC 51530 / DSM 4299 / JCM 9571 / NBRC 15438 / GSS1).